We begin with the raw amino-acid sequence, 909 residues long: Probable dipeptidyl-aminopeptidase B (909 aa).

Residues 1 to 63 (MRVGSRINDE…HNHNGRAQGN (63 aa)) are disordered. Over 1 to 94 (MRVGSRINDE…NGKSNQRRTL (94 aa)) the chain is Cytoplasmic. Over residues 27 to 38 (DSSSTASISLTL) the composition is skewed to low complexity. Residues 95 to 115 (IVFWLLVALCVGGWAVAFLFF) traverse the membrane as a helical; Signal-anchor for type II membrane protein segment. The Vacuolar portion of the chain corresponds to 116 to 909 (VTSPGNKTST…YSNFLPIRSF (794 aa)). Asparagine 121 is a glycosylation site (N-linked (GlcNAc...) asparagine). The segment covering 123 to 134 (TSTSPHSGSNSP) has biased composition (polar residues). The interval 123–144 (TSTSPHSGSNSPEGDVTKPGIP) is disordered. Asparagine 207, asparagine 303, and asparagine 355 each carry an N-linked (GlcNAc...) asparagine glycan. The active-site Charge relay system is the serine 760. Asparagine 814, asparagine 819, and asparagine 822 each carry an N-linked (GlcNAc...) asparagine glycan. Residues aspartate 837 and histidine 870 each act as charge relay system in the active site. N-linked (GlcNAc...) asparagine glycosylation occurs at asparagine 888.

It belongs to the peptidase S9B family.

It is found in the vacuole membrane. It catalyses the reaction Release of an N-terminal dipeptide, Xaa-Yaa-|-Zaa-, from a polypeptide, preferentially when Yaa is Pro, provided Zaa is neither Pro nor hydroxyproline.. Type IV dipeptidyl-peptidase which removes N-terminal dipeptides sequentially from polypeptides having unsubstituted N-termini provided that the penultimate residue is proline. The chain is Probable dipeptidyl-aminopeptidase B (DAPB) from Arthroderma benhamiae (strain ATCC MYA-4681 / CBS 112371) (Trichophyton mentagrophytes).